We begin with the raw amino-acid sequence, 130 residues long: kinetoplast-associated protein 2-2 (130 aa).

Positions 1–10 are excised as a propeptide; that stretch reads MLRRTVSNFA. The interval 95–130 is disordered; sequence ETKQAQRAKAQKAQKKPKSAKSKVKKAAKKAKKSKK. Residues 103 to 130 are compositionally biased toward basic residues; that stretch reads KAQKAQKKPKSAKSKVKKAAKKAKKSKK.

The protein belongs to the KAP family. Associates with the kinetoplast DNA network.

The protein localises to the mitochondrion matrix. It localises to the kinetoplast. Histone H1-like DNA-binding protein involved in the organization and segregation of kinetoplast DNA (kDNA). The mitochondrial DNA of kinetoplastid protozoa consists of about 5,000 minicircles and 20 to 30 maxicircles. These circular DNAs are held together by catenation into a highly organized compact disk structure referred to as a kinetoplast DNA (kDNA) network. Binds preferentially to a specific fragment of minicircle DNA and is able to compact kDNA networks through DNA charge neutralization and condensation. This chain is kinetoplast-associated protein 2-2 (KAP2-2), found in Crithidia fasciculata.